Here is a 134-residue protein sequence, read N- to C-terminus: Cerato-platanin (134 aa).

Positions 1–14 (MKFSILPMIASAMA) are cleaved as a signal peptide. Positions 18–20 (SYD) are binding of oligomers of N-acetylglucosamine (GlcNAc). 3 binding of N-acetylglucosamine tetramer (GlcNAc-4) regions span residues 31-43 (SVAC…GLMA), 65-68 (GWDS), and 91-95 (DSGRG). Intrachain disulfides connect C34–C71 and C74–C129. Residues 113 to 116 (AGRV) are binding of oligomers of N-acetylglucosamine (GlcNAc).

This sequence belongs to the cerato-platanin family. Monomer.

Its subcellular location is the secreted. It is found in the cell wall. In terms of biological role, phytotoxin which causes production of phytoalexin in platanus acerifolia, platanus occidentalis and platanus orientalis. Induces cell necrosis in tobacco leaves, and in callus cells and leaves of P.acerifolia. Induces reactive oxygen species (ROS) synthesis, nitric oxide (NO) production and mitogen-activated protein kinases (MAPKs) phosphorylation in the leaves of A.thaliana and P.acerifolia. Results in H(2)O(2) production on the epidermis around the stomata, rapid closure of the stomata, reduced photosynthetic and CO(2) assimilation rate, and an increase in a number of volatile organic compound (VOC) emission in A.thaliana leaves. Induces overexpression of genes related to salicylic acid- and ethylene-signaling, camalexin synthesis, ROS production and oxidative stress, and genes of various receptor kinases, and down-regulation of a number of jasmonic acid (JA)-signaling genes in A.thaliana leaves. Renders resistance against C.platani in A.thaliana and P.acerifolia. Renders localised resistance of A.thaliana against infection by virulent foliar pathogens B.cinerea and P.syringae pv. tomato. Binds cellulose analog carboxymethyl cellulose (CMC). Expansin-like protein with probable fungal and plant cell wall loosening activity based on its non-enzymatic cellulose weakening activity in vitro. Increases glucose production by cellulase after pre-incubation of cellulose with this protein. In contrast, according to PubMed:23512479, no synergistic effect with cellulases. May have a structural role in the fungal cell wall based on its ability to bind chitin, but does not bind beta-1,3-glucan. In Ceratocystis fimbriata f. sp. platani, this protein is Cerato-platanin.